A 134-amino-acid polypeptide reads, in one-letter code: uncharacterized protein (134 aa).

This is an uncharacterized protein from Homo sapiens (Human).